A 227-amino-acid polypeptide reads, in one-letter code: 2,3-bisphosphoglycerate-dependent phosphoglycerate mutase (227 aa).

Substrate-binding positions include 8–15, 21–22, Arg-58, 110–113, Lys-121, 137–138, and 181–182; these read RHGQSIWN, TG, ERYY, RR, and GN. Residue His-9 is the Tele-phosphohistidine intermediate of the active site. Residue Glu-110 is the Proton donor/acceptor of the active site.

This sequence belongs to the phosphoglycerate mutase family. BPG-dependent PGAM subfamily. In terms of assembly, homodimer.

It catalyses the reaction (2R)-2-phosphoglycerate = (2R)-3-phosphoglycerate. Its pathway is carbohydrate degradation; glycolysis; pyruvate from D-glyceraldehyde 3-phosphate: step 3/5. Its function is as follows. Catalyzes the interconversion of 2-phosphoglycerate and 3-phosphoglycerate. This Pseudoalteromonas atlantica (strain T6c / ATCC BAA-1087) protein is 2,3-bisphosphoglycerate-dependent phosphoglycerate mutase.